Reading from the N-terminus, the 257-residue chain is Zinc transporter ZupT (257 aa).

5 helical membrane-spanning segments follow: residues 5–25, 32–52, 61–81, 109–129, and 137–157; these read LILT…AVLG, VLAF…LMEM, GMSP…YFGL, AILL…ATFV, and LGMG…LAVA. Residues N120 and E123 each contribute to the Fe(2+) site. Residues E123 and H148 each contribute to the Zn(2+) site. Fe(2+) is bound by residues N149, E152, and E181. Residue E152 coordinates Zn(2+). 3 helical membrane passes run 182-202, 203-223, and 236-256; these read ILGG…VVMA, AVMA…LMPL, and GVLC…TAGI.

Belongs to the ZIP transporter (TC 2.A.5) family. ZupT subfamily.

The protein resides in the cell inner membrane. The enzyme catalyses Zn(2+)(in) = Zn(2+)(out). Its function is as follows. Mediates zinc uptake. May also transport other divalent cations. In Escherichia fergusonii (strain ATCC 35469 / DSM 13698 / CCUG 18766 / IAM 14443 / JCM 21226 / LMG 7866 / NBRC 102419 / NCTC 12128 / CDC 0568-73), this protein is Zinc transporter ZupT.